Consider the following 450-residue polypeptide: Tol-Pal system protein TolB (450 aa).

An N-terminal signal peptide occupies residues 1-47 (MRKLWAPNWLSAKRHHANQAATRLIGRHALMAWLAAALALSAGAAQA).

It belongs to the TolB family. The Tol-Pal system is composed of five core proteins: the inner membrane proteins TolA, TolQ and TolR, the periplasmic protein TolB and the outer membrane protein Pal. They form a network linking the inner and outer membranes and the peptidoglycan layer.

Its subcellular location is the periplasm. Its function is as follows. Part of the Tol-Pal system, which plays a role in outer membrane invagination during cell division and is important for maintaining outer membrane integrity. The sequence is that of Tol-Pal system protein TolB from Cupriavidus pinatubonensis (strain JMP 134 / LMG 1197) (Cupriavidus necator (strain JMP 134)).